The primary structure comprises 146 residues: Single-stranded DNA-binding protein, mitochondrial (146 aa).

The transit peptide at Met1–His16 directs the protein to the mitochondrion. One can recognise an SSB domain in the interval Ile29 to Ser140.

It localises to the mitochondrion. The protein resides in the mitochondrion matrix. Its subcellular location is the mitochondrion nucleoid. Binds preferentially and cooperatively to pyrimidine rich single-stranded DNA (ss-DNA). May be required to maintain the copy number of mitochondrial DNA (mtDNA) and play a crucial role during mtDNA replication. Required for retinal ganglion cell differentiation and retinal integrity. This Danio rerio (Zebrafish) protein is Single-stranded DNA-binding protein, mitochondrial.